The chain runs to 1531 residues: Probable outer membrane protein PmpD (1531 aa).

The first 20 residues, 1-20 (MSSEKDIKSTCSKFSLSVVA), serve as a signal peptide directing secretion. Residues 1244-1531 (EFDYSTNVWG…EANTGLRLIF (288 aa)) form the Autotransporter domain.

Belongs to the PMP outer membrane protein family.

It localises to the secreted. The protein resides in the cell wall. The protein localises to the cell outer membrane. This chain is Probable outer membrane protein PmpD (pmpD), found in Chlamydia trachomatis serovar D (strain ATCC VR-885 / DSM 19411 / UW-3/Cx).